We begin with the raw amino-acid sequence, 238 residues long: MGIDELYKKEFGIVAGVDEAGRGCLAGPVVAAAVVLEKEIEGINDSKQLSPAKRERLLDEIMEKAAVGIGIASPEEIDLYNIFNATKLAMNRALENLSVKPSFVLVDGKGIELSVPGTCLVKGDQKSKLIGAASIVAKVFRDRLMSEFHRMYPQFSFHKHKGYATKEHLNEIRKNGVLPIHRLSFEPVLELLTDDLLREFFEKGLISENRFERILNLLGARKSVVFRKERTNHNLPLF.

The RNase H type-2 domain maps to G12 to L197. The a divalent metal cation site is built by D18, E19, and D107.

This sequence belongs to the RNase HII family. The cofactor is Mn(2+). Mg(2+) is required as a cofactor.

It localises to the cytoplasm. The enzyme catalyses Endonucleolytic cleavage to 5'-phosphomonoester.. In terms of biological role, endonuclease that specifically degrades the RNA of RNA-DNA hybrids. This is Ribonuclease HII (rnhB) from Thermotoga maritima (strain ATCC 43589 / DSM 3109 / JCM 10099 / NBRC 100826 / MSB8).